The chain runs to 522 residues: Probable protein kinase UbiB (522 aa).

The region spanning 119-496 (SFDADPVASA…QRRTNRLLLT (378 aa)) is the Protein kinase domain. Residues 125 to 133 (VASASIAQV) and lysine 147 contribute to the ATP site. Residue aspartate 282 is the Proton acceptor of the active site. A helical transmembrane segment spans residues 494–514 (LLTVFYLIGGFVAGGLFAHWI).

The protein belongs to the ABC1 family. UbiB subfamily.

It localises to the cell inner membrane. It functions in the pathway cofactor biosynthesis; ubiquinone biosynthesis [regulation]. Its function is as follows. Is probably a protein kinase regulator of UbiI activity which is involved in aerobic coenzyme Q (ubiquinone) biosynthesis. This chain is Probable protein kinase UbiB, found in Leptothrix cholodnii (strain ATCC 51168 / LMG 8142 / SP-6) (Leptothrix discophora (strain SP-6)).